Consider the following 130-residue polypeptide: Protein ApaG (130 aa).

Residues Arg3–Arg127 enclose the ApaG domain. Residues Glu63 to Glu83 are disordered.

This Rhizobium etli (strain ATCC 51251 / DSM 11541 / JCM 21823 / NBRC 15573 / CFN 42) protein is Protein ApaG.